The sequence spans 489 residues: MHLKKGKRSISTVWRLLWKRFYSVNSKTNMHFSRSRKKPVTNFTRTNGLLLSCNGDTFPYLRTLWRYFNAPGNLMFVTTNIVAFMGIVTYNTLVTISSERAFEEQMMAAQVSLAKQREELETTALSLPRDIELRGEEDDIKWEQPDVAHVREDPLVEEQNAKLDTPIKQYTLGDLILNKRENVTDYDSQRAKASIFHMLYAYMLYRDVIQPTTMTQNNNSEEWRREVELLTKGKEVQGTHRRIDVFYDLWNKNFDKIVTSPEKVQNFQLPNWSKYPTILKFICTELHDNSLKTLGEFKQFYGKVRSNEVKKLLGLWLYDHSFLFPHNIYDNRTEEDFYDILINDSMQDNRIFQKYSSIVMNPYNERTQLFFPNVNSPSVNKPVPSISLETYTRLLKGYINLQETGCKYDYNDNIFKLISILKLNCFLQRNKKKHAGPTVRILLPRDEDRSQILGTISQAEKRTCYQILSKNRDVVALLKRISDIQADSS.

The protein resides in the mitochondrion inner membrane. Functionally, required for the expression of the mitochondrial gene for cytochrome c oxidase subunit III (COX3). In Saccharomyces cerevisiae (strain ATCC 204508 / S288c) (Baker's yeast), this protein is COX3 mRNA-specific translational activator PET494 (PET494).